The primary structure comprises 417 residues: MAP kinase-interacting serine/threonine-protein kinase 1 (417 aa).

Residues Met1–Arg20 form a disordered region. A Protein kinase domain is found at Arg37 to Leu321. ATP contacts are provided by residues Leu43 to Val51 and Lys66. Asp158 functions as the Proton acceptor in the catalytic mechanism. Positions Ala397–Thr417 are disordered. The span at Leu406–Thr417 shows a compositional bias: polar residues.

The protein belongs to the protein kinase superfamily. CAMK Ser/Thr protein kinase family. Requires Mg(2+) as cofactor.

The enzyme catalyses L-seryl-[protein] + ATP = O-phospho-L-seryl-[protein] + ADP + H(+). The catalysed reaction is L-threonyl-[protein] + ATP = O-phospho-L-threonyl-[protein] + ADP + H(+). Functionally, may play a role in the response to environmental stress and cytokines. Appears to regulate translation by phosphorylating EIF4E, thus increasing the affinity of this protein for the 7-methylguanosine-containing mRNA cap. This chain is MAP kinase-interacting serine/threonine-protein kinase 1 (mknk1), found in Xenopus tropicalis (Western clawed frog).